The chain runs to 596 residues: Cysteine--tRNA ligase (596 aa).

The unknown stretch occupies residues 1–199 (MKSKTFLEKN…SQRYFEELRK (199 aa)). Residue C212 coordinates Zn(2+). The short motif at 214-224 (PTVYDEVHIGN) is the 'HIGH' region element. C377, H403, and E407 together coordinate Zn(2+). Positions 435–439 (KMSKS) match the 'KMSKS' region motif. ATP is bound at residue K438.

The protein belongs to the class-I aminoacyl-tRNA synthetase family. Monomer. It depends on Zn(2+) as a cofactor.

It is found in the cytoplasm. The catalysed reaction is tRNA(Cys) + L-cysteine + ATP = L-cysteinyl-tRNA(Cys) + AMP + diphosphate. The chain is Cysteine--tRNA ligase (cysS) from Mycoplasmopsis pulmonis (strain UAB CTIP) (Mycoplasma pulmonis).